A 387-amino-acid polypeptide reads, in one-letter code: Phosphoglycerate kinase (387 aa).

Residues 21–23, Arg36, 59–62, Arg113, and Arg146 each bind substrate; these read DLN and HLGR. ATP-binding positions include Lys197, Glu314, and 340 to 343; that span reads GGDT.

It belongs to the phosphoglycerate kinase family. In terms of assembly, monomer.

The protein resides in the cytoplasm. The catalysed reaction is (2R)-3-phosphoglycerate + ATP = (2R)-3-phospho-glyceroyl phosphate + ADP. Its pathway is carbohydrate degradation; glycolysis; pyruvate from D-glyceraldehyde 3-phosphate: step 2/5. In Photorhabdus luminescens (Xenorhabdus luminescens), this protein is Phosphoglycerate kinase.